Reading from the N-terminus, the 244-residue chain is 7-cyano-7-deazaguanine synthase (244 aa).

An ATP-binding site is contributed by 14–24 (FSGGQDSATCV). Residues Cys-202, Cys-217, Cys-220, and Cys-223 each contribute to the Zn(2+) site.

The protein belongs to the QueC family. The cofactor is Zn(2+).

It catalyses the reaction 7-carboxy-7-deazaguanine + NH4(+) + ATP = 7-cyano-7-deazaguanine + ADP + phosphate + H2O + H(+). Its pathway is purine metabolism; 7-cyano-7-deazaguanine biosynthesis. In terms of biological role, catalyzes the ATP-dependent conversion of 7-carboxy-7-deazaguanine (CDG) to 7-cyano-7-deazaguanine (preQ(0)). The chain is 7-cyano-7-deazaguanine synthase from Burkholderia mallei (strain NCTC 10229).